The primary structure comprises 190 residues: MPRANEIKKGMVLNYNGKLLIVKDIDIQSPTARGAATLYKMRFSDVRTGLKVEERFKGDDIVDTVTLSRRGVDFSYIDGNEYVFMDKEDYTPYTFTKDQIEEELLFIPEGGMPDMQVLTWDGQLLALELPQTVDLEIVETAPGIKGASASARNKPATLSTGLVIQVPEYLSAGEKIRIHIEERRYMGRAD.

The protein belongs to the elongation factor P family.

This chain is Elongation factor P-like protein, found in Citrobacter koseri (strain ATCC BAA-895 / CDC 4225-83 / SGSC4696).